Consider the following 160-residue polypeptide: Suppressyn (160 aa).

The signal sequence occupies residues 1 to 39 (MACIYPTTFYTSLPTKSLNMGISLTTILILSVAVLLSTA). Residues 137-160 (AKASKPTTPPENRPRHFHSFIQKL) are disordered.

As to quaternary structure, interacts (secreted) with SLC1A5; mainly at cell surface. As to expression, specifically expressed in placenta by extravillous trophoblasts and syncytiotrophoblasts (at protein level).

The protein localises to the secreted. In terms of biological role, may play a role in trophoblasts syncytialization, the spontaneous fusion of their plasma membranes, an essential process in placental development. May negatively regulate cell-cell fusion by interacting with SLC1A5, the probable receptor on the cell surface of the fusogenic syncytin-1/ERVW-1. This is Suppressyn (ERVH48-1) from Homo sapiens (Human).